The sequence spans 90 residues: ATP synthase subunit e, mitochondrial (90 aa).

Ser-2 is subject to N-acetylserine. A helical membrane pass occupies residues 7–23; it reads VLRWSALGAGVVYGFVH.

F-type ATP synthases have 2 components, the catalytic core F(1) and the membrane-embedded component F(0), linked together by a central stalk and a peripheral stalk. The central stalk, also called rotor shaft, is often seen as part of F(1). The peripheral stalk is seen as part of F(0). F(0) contains the membrane channel next to the rotor. F-type ATP synthases form dimers but each monomer functions independently in ATP generation. The dimer consists of 17 different polypeptides: ATP1 (subunit alpha, 3 molecules per monomer, part of F(1)), ATP2 (subunit beta, 3 copies per monomer, part of F(1)), ATP3 (subunit gamma, part of the central stalk), ATP4 (subunit b, part of the peripheral stalk), ATP5/OSCP (subunit 5/OSCP, part of the peripheral stalk), ATP6 (subunit a, part of the peripheral stalk), ATP7 (subunit d, part of the peripheral stalk), ATP8 (subunit 8, part of the peripheral stalk), OLI1 (subunit c, part of the rotor, 10 molecules per monomer), ATP14 (subunit h, part of the peripheral stalk), ATP15 (subunit epsilon, part of the central stalk), ATP16 (subunit delta, part of the central stalk), ATP17 (subunit f, part of the peripheral stalk), ATP18 (subunit i/j, part of the peripheral stalk), ATP19 (subunit k, dimer-specific, at interface between monomers), ATP20 (subunit g, at interface between monomers), TIM11 (subunit e, at interface between monomers).

Its subcellular location is the mitochondrion inner membrane. Functionally, mitochondrial membrane ATP synthase (F(1)F(0) ATP synthase or Complex V) produces ATP from ADP in the presence of a proton gradient across the membrane which is generated by electron transport complexes of the respiratory chain. F-type ATP synthases consist of two structural domains, F(1) - containing the extramembraneous catalytic core, and F(0) - containing the membrane proton channel, linked together by a central stalk and a peripheral stalk. During catalysis, ATP synthesis in the catalytic domain of F(1) is coupled via a rotary mechanism of the central stalk subunits to proton translocation. Part of the complex F(0) domain. Minor subunit located with subunit a/ATP6 in the membrane. Together with subunit g/ATP20, probably contributes to membrane curvature at the site of the ATP synthase dimer, ultimately contributing to formation of cristae. This is ATP synthase subunit e, mitochondrial from Yarrowia lipolytica (strain CLIB 122 / E 150) (Yeast).